A 351-amino-acid chain; its full sequence is Succinylglutamate desuccinylase (351 aa).

Positions 73, 76, and 168 each coordinate Zn(2+). Residue glutamate 231 is part of the active site.

This sequence belongs to the AspA/AstE family. Succinylglutamate desuccinylase subfamily. Requires Zn(2+) as cofactor.

It catalyses the reaction N-succinyl-L-glutamate + H2O = L-glutamate + succinate. It functions in the pathway amino-acid degradation; L-arginine degradation via AST pathway; L-glutamate and succinate from L-arginine: step 5/5. Its function is as follows. Transforms N(2)-succinylglutamate into succinate and glutamate. The sequence is that of Succinylglutamate desuccinylase from Burkholderia lata (strain ATCC 17760 / DSM 23089 / LMG 22485 / NCIMB 9086 / R18194 / 383).